We begin with the raw amino-acid sequence, 308 residues long: Tyrosine recombinase XerD (308 aa).

The Core-binding (CB) domain occupies 3-89 (NGFTRLTEQF…SIHEFHRFAL (87 aa)). The 192-residue stretch at 110 to 301 (TLPDVLTVDE…SPETLIETYL (192 aa)) folds into the Tyr recombinase domain. Active-site residues include R153, K177, H253, R256, and H279. The active-site O-(3'-phospho-DNA)-tyrosine intermediate is the Y288.

It belongs to the 'phage' integrase family. XerD subfamily. In terms of assembly, forms a cyclic heterotetrameric complex composed of two molecules of XerC and two molecules of XerD.

The protein resides in the cytoplasm. Site-specific tyrosine recombinase, which acts by catalyzing the cutting and rejoining of the recombining DNA molecules. The XerC-XerD complex is essential to convert dimers of the bacterial chromosome into monomers to permit their segregation at cell division. It also contributes to the segregational stability of plasmids. The chain is Tyrosine recombinase XerD from Bifidobacterium longum (strain NCC 2705).